Here is a 430-residue protein sequence, read N- to C-terminus: DD-carboxypeptidase/endopeptidase Mpg (430 aa).

3 residues coordinate Zn(2+): H295, D299, and H375.

This sequence belongs to the peptidase M23B family. Monomer. It depends on Zn(2+) as a cofactor. In terms of processing, likely to be synthesized as a proenzyme. The cleavage of the N-terminal domain is probably required for the activation of the enzyme.

It localises to the cell outer membrane. Its function is as follows. Has both endopeptidase and DD-carboxypeptidase activities. Degrades cell wall peptidoglycan (PG) to allow consummate expression of pili. In Neisseria meningitidis serogroup B (strain ATCC BAA-335 / MC58), this protein is DD-carboxypeptidase/endopeptidase Mpg.